The sequence spans 138 residues: MAKLLPRIGSRKNGRISSRKNARKIPKGVIHVQASFNNTIVTVTDVRGRVISWSSAGACGFRGTRRGTPFAAQTAAGNAIRTVVDQGMQRAEVMIKGPGLGRDAALRAIRRSGILLSFVRDVTPMPHNGCRPPKKRRV.

The segment at 1–22 is disordered; the sequence is MAKLLPRIGSRKNGRISSRKNA. Over residues 9–22 the composition is skewed to basic residues; that stretch reads GSRKNGRISSRKNA.

Belongs to the universal ribosomal protein uS11 family. As to quaternary structure, part of the 30S ribosomal subunit.

It localises to the plastid. It is found in the chloroplast. This Populus alba (White poplar) protein is Small ribosomal subunit protein uS11c.